Here is a 546-residue protein sequence, read N- to C-terminus: Alkaline phosphatase PafA (546 aa).

Residues Met1–Ala25 form the signal peptide. Positions 38 and 79 each coordinate Zn(2+). Thr79 serves as the catalytic Phosphothreonine intermediate. Residues Asn100 and Lys162–Arg164 each bind substrate. 5 residues coordinate Zn(2+): Asp305, His309, Asp352, His353, and His486.

Requires Zn(2+) as cofactor.

Its subcellular location is the periplasm. The enzyme catalyses a phosphate monoester + H2O = an alcohol + phosphate. With respect to regulation, strongly inhibited by orthovanadate and EDTA. Also inhibited by inorganic phosphate. In terms of biological role, alkaline phosphatase with broad substrate specificity. Has phosphatase activity towards nucleotide phosphates with a preference for ATP. Active towards a great variety of phosphomonoesters with the exception of 2',3'-cyclic AMP and myo-inositol hexakisphosphate. In Elizabethkingia meningoseptica (Chryseobacterium meningosepticum), this protein is Alkaline phosphatase PafA.